A 41-amino-acid chain; its full sequence is Maticotoxin A (41 aa).

Disulfide bonds link C3–C22 and C15–C39.

This sequence belongs to the three-finger toxin family. Short-chain subfamily. Expressed by the venom gland.

Its subcellular location is the secreted. The protein is Maticotoxin A of Calliophis bivirgatus (Blue Malaysian coral snake).